The chain runs to 497 residues: Serine/arginine-rich protein PSR (497 aa).

The signal sequence occupies residues 1–19; that stretch reads MYSRCIALVFVGLLASSLA. Residues 20–366 are Extracellular-facing; sequence ANCYGPAGKL…HHGLSSQKLG (347 aa). 5 N-linked (GlcNAc...) asparagine glycosylation sites follow: asparagine 92, asparagine 193, asparagine 202, asparagine 261, and asparagine 283. Residues 367 to 387 form a helical membrane-spanning segment; it reads LAIGLPIAGVFLIILIAAAII. The Cytoplasmic segment spans residues 388-497; that stretch reads YYRKRRESEK…ESASRDSDSD (110 aa). The segment at 424–450 is necessary for phosphorylation by PSRPK in vitro; sequence MGSKTMQAMLDMRDDDESEHDSDDGYG. A compositionally biased stretch (acidic residues) spans 436 to 447; sequence RDDDESEHDSDD. Residues 436–497 form a disordered region; the sequence is RDDDESEHDS…ESASRDSDSD (62 aa). A compositionally biased stretch (basic residues) spans 459 to 471; sequence GRSRSRSRSRSVS. A compositionally biased stretch (basic and acidic residues) spans 476–497; it reads GSRDARSESDPGESASRDSDSD.

Phosphorylated on serine residues in the RS domain by PSRPK.

The protein localises to the membrane. This Physarum polycephalum (Slime mold) protein is Serine/arginine-rich protein PSR.